The sequence spans 59 residues: UPF0337 protein PP_4561 (59 aa).

The span at 27-43 shows a compositional bias: basic and acidic residues; sequence TDNEKLRAEGKAQELKG. Residues 27-59 form a disordered region; the sequence is TDNEKLRAEGKAQELKGEAQQVKGNVKDAVKKP.

The protein belongs to the UPF0337 (CsbD) family.

This is UPF0337 protein PP_4561 from Pseudomonas putida (strain ATCC 47054 / DSM 6125 / CFBP 8728 / NCIMB 11950 / KT2440).